Reading from the N-terminus, the 829-residue chain is Dipeptidyl peptidase family member 2 (829 aa).

At 1 to 27 the chain is on the cytoplasmic side; it reads MENDNYDVEEQGCSVFNGKHGYFARSC. Residues 28 to 48 form a helical; Signal-anchor for type II membrane protein membrane-spanning segment; sequence CVVFILIICVIFVFSVIFTFM. Residues 49–829 lie on the Extracellular side of the membrane; the sequence is QNPINLNSDN…DCFKSNLDLL (781 aa). Residues N61, N66, N183, N209, N314, and N359 are each glycosylated (N-linked (GlcNAc...) asparagine). Cysteines 514 and 533 form a disulfide. S691 functions as the Charge relay system in the catalytic mechanism. Cysteines 711 and 821 form a disulfide. N754 carries an N-linked (GlcNAc...) asparagine glycan. Residues D768 and H800 each act as charge relay system in the active site.

This sequence belongs to the peptidase S9B family. DPPIV subfamily.

The protein resides in the cell membrane. Removes N-terminal dipeptides sequentially from polypeptides. Essential for control of distal tip cell migration. The chain is Dipeptidyl peptidase family member 2 (dpf-2) from Caenorhabditis elegans.